The following is a 324-amino-acid chain: MPVCLLVSEDNSHKPIELHHQQSVTLGRGPDTKIKDKKCSREQVELRADCNRGFVTVKQLGVNPTLVDDVVVGKGNQVSIKPGQSLYMVNQQYPYSVKFTEDTSRSKPSKRAQQIQSPTKTTADVSDSPPPPKKTTPPAGEKSESAGHWSQGLKASMQDPKMQVYKDDSVVVIKDKYPKARYHWLVLPWQSISSLKALRSEHVELLKHMQRVADQMVEQCPDAHKLSFRLGYHAIPSMSHVHLHVISQDFDSPCLKNKKHWNSFTTDYFVESQDVISMLEHDGKVQVKEGAGELLKLPLRCHVCGKEQTTIPKLKDHLKTHLPS.

One can recognise an FHA-like domain in the interval 23–72 (SVTLGRGPDTKIKDKKCSREQVELRADCNRGFVTVKQLGVNPTLVDDVVV). The interval 100-160 (TEDTSRSKPS…QGLKASMQDP (61 aa)) is disordered. A compositionally biased stretch (polar residues) spans 111 to 125 (RAQQIQSPTKTTADV). The 106-residue stretch at 150–255 (SQGLKASMQD…ISQDFDSPCL (106 aa)) folds into the HIT domain. Interaction with DNA substrate stretches follow at residues 175-179 (DKYPK) and 237-238 (SM). Residues 240–244 (HVHLH) carry the Histidine triad motif motif. Histidine 242 serves as the catalytic Tele-AMP-histidine intermediate. The segment at 299 to 321 (LRCHVCGKEQTTIPKLKDHLKTH) adopts a C2H2-type zinc-finger fold.

The protein resides in the nucleus. It is found in the nucleoplasm. Its subcellular location is the nucleolus. The enzyme catalyses a 5'-end adenosine-5'-diphospho-5'-2'-deoxyribonucleoside-DNA + H2O = a 5'-end 5'-phospho-2'-deoxyribonucleoside-DNA + AMP + 2 H(+). It carries out the reaction a 5'-end adenosine-5'-diphospho-5'-ribonucleoside-2'-deoxyribonucleotide-DNA + H2O = a 5'-end 5'-phospho-ribonucleoside-2'-deoxyribonucleotide-DNA + AMP + 2 H(+). The catalysed reaction is a 3'-end 2'-deoxyribonucleotide-3'-diphospho-5'-guanosine-DNA + H2O = a 3'-end 2'-deoxyribonucleotide 3'-phosphate-DNA + GMP + 2 H(+). DNA-binding protein involved in single-strand DNA break repair, double-strand DNA break repair and base excision repair. Resolves abortive DNA ligation intermediates formed either at base excision sites, or when DNA ligases attempt to repair non-ligatable breaks induced by reactive oxygen species. Catalyzes the release of adenylate groups covalently linked to 5'-phosphate termini, resulting in the production of 5'-phosphate termini that can be efficiently rejoined. Also able to hydrolyze adenosine 5'-monophosphoramidate (AMP-NH(2)) and diadenosine tetraphosphate (AppppA), but with lower catalytic activity. Likewise, catalyzes the release of 3'-linked guanosine (DNAppG) and inosine (DNAppI) from DNA, but has higher specific activity with 5'-linked adenosine (AppDNA). The polypeptide is Aprataxin (aptx) (Danio rerio (Zebrafish)).